The chain runs to 102 residues: Putative pterin-4-alpha-carbinolamine dehydratase (102 aa).

This sequence belongs to the pterin-4-alpha-carbinolamine dehydratase family.

The catalysed reaction is (4aS,6R)-4a-hydroxy-L-erythro-5,6,7,8-tetrahydrobiopterin = (6R)-L-erythro-6,7-dihydrobiopterin + H2O. The polypeptide is Putative pterin-4-alpha-carbinolamine dehydratase (Burkholderia cenocepacia (strain ATCC BAA-245 / DSM 16553 / LMG 16656 / NCTC 13227 / J2315 / CF5610) (Burkholderia cepacia (strain J2315))).